Consider the following 282-residue polypeptide: 4-diphosphocytidyl-2-C-methyl-D-erythritol kinase (282 aa).

Residue K11 is part of the active site. Residue 95 to 105 participates in ATP binding; the sequence is PMGGGVGGGSS. D137 is a catalytic residue.

The protein belongs to the GHMP kinase family. IspE subfamily.

The enzyme catalyses 4-CDP-2-C-methyl-D-erythritol + ATP = 4-CDP-2-C-methyl-D-erythritol 2-phosphate + ADP + H(+). It functions in the pathway isoprenoid biosynthesis; isopentenyl diphosphate biosynthesis via DXP pathway; isopentenyl diphosphate from 1-deoxy-D-xylulose 5-phosphate: step 3/6. Functionally, catalyzes the phosphorylation of the position 2 hydroxy group of 4-diphosphocytidyl-2C-methyl-D-erythritol. The sequence is that of 4-diphosphocytidyl-2-C-methyl-D-erythritol kinase from Haemophilus ducreyi (strain 35000HP / ATCC 700724).